The chain runs to 351 residues: Tetraacyldisaccharide 4'-kinase (351 aa).

Position 47–54 (47–54) interacts with ATP; sequence KAGGTGKT.

This sequence belongs to the LpxK family.

The catalysed reaction is a lipid A disaccharide + ATP = a lipid IVA + ADP + H(+). It participates in glycolipid biosynthesis; lipid IV(A) biosynthesis; lipid IV(A) from (3R)-3-hydroxytetradecanoyl-[acyl-carrier-protein] and UDP-N-acetyl-alpha-D-glucosamine: step 6/6. Transfers the gamma-phosphate of ATP to the 4'-position of a tetraacyldisaccharide 1-phosphate intermediate (termed DS-1-P) to form tetraacyldisaccharide 1,4'-bis-phosphate (lipid IVA). The polypeptide is Tetraacyldisaccharide 4'-kinase (Cytophaga hutchinsonii (strain ATCC 33406 / DSM 1761 / CIP 103989 / NBRC 15051 / NCIMB 9469 / D465)).